Here is a 181-residue protein sequence, read N- to C-terminus: Epidermin decarboxylase (181 aa).

The active site involves His-67.

The protein belongs to the HFCD (homooligomeric flavin containing Cys decarboxylase) superfamily. In terms of assembly, homododecamer. It depends on FMN as a cofactor.

Functionally, catalyzes the removal of two reducing equivalents (oxidative decarboxylation) from the cysteine residue of the C-terminal meso-lanthionine of epidermin to form a --C==C-- double bond. The protein is Epidermin decarboxylase (epiD) of Staphylococcus epidermidis.